The primary structure comprises 311 residues: Heme A synthase (311 aa).

Over 1–6 the chain is Cytoplasmic; the sequence is MQRFIK. Residues 7-27 form a helical membrane-spanning segment; the sequence is WLAVITSLDLLIVLLGGALVT. Over 28-62 the chain is Extracellular; it reads KTGSGQGCGKSWPLCNGEFVPSNLSMETIIELSHR. Cys35 and Cys42 are oxidised to a cystine. Residue Glu58 is part of the active site. His61 contacts heme o. Residues 63 to 83 form a helical membrane-spanning segment; the sequence is LTSGSAGILVTLLCILSWKYY. Residues 84-91 are Cytoplasmic-facing; the sequence is KHVRETKT. A helical transmembrane segment spans residues 92-112; the sequence is LAILSFVFLVAQALMGAAAVV. Topologically, residues 113 to 121 are extracellular; the sequence is WGQMPAVLA. The chain crosses the membrane as a helical span at residues 122 to 142; it reads IHFGISLISFASVILLTCLIF. His123 is a heme o binding site. Residues 143 to 159 lie on the Cytoplasmic side of the membrane; it reads EIDQKFDARSLIMDKKM. The chain crosses the membrane as a helical span at residues 160 to 180; it reads KFHIYGVTIYSYIVVYTGALV. Over 181–211 the chain is Extracellular; it reads RHERASLACPDFPLCSKNRPMPTQLHEWVQM. A disulfide bridge links Cys189 with Cys195. The helical transmembrane segment at 212 to 232 threads the bilayer; that stretch reads GHRVAAMLIFAWILYAMILAI. His213 contributes to the heme b binding site. Residues 233-243 are Cytoplasmic-facing; sequence RHYKQQPVVYW. A helical membrane pass occupies residues 244–264; sequence GWIISFILVTLQAIVGILVVF. The Extracellular segment spans residues 265–271; the sequence is TNASLSM. The helical transmembrane segment at 272-292 threads the bilayer; sequence ALLHSLFISCLFAVLCYLVML. His275 serves as a coordination point for heme b. The Cytoplasmic portion of the chain corresponds to 293–311; sequence GTRSKVNAKEAASTSKQTK.

The protein belongs to the COX15/CtaA family. Type 1 subfamily. In terms of assembly, interacts with CtaB. It depends on heme b as a cofactor.

The protein resides in the cell membrane. The catalysed reaction is Fe(II)-heme o + 2 A + H2O = Fe(II)-heme a + 2 AH2. Its pathway is porphyrin-containing compound metabolism; heme A biosynthesis; heme A from heme O: step 1/1. Catalyzes the conversion of heme O to heme A by two successive hydroxylations of the methyl group at C8. The first hydroxylation forms heme I, the second hydroxylation results in an unstable dihydroxymethyl group, which spontaneously dehydrates, resulting in the formyl group of heme A. This Bacillus cereus (strain ATCC 10987 / NRS 248) protein is Heme A synthase.